Consider the following 382-residue polypeptide: O-antigen polymerase (382 aa).

The Cytoplasmic portion of the chain corresponds to 1–3; the sequence is MNN. The helical transmembrane segment at 4–22 threads the bilayer; sequence INKIFITFLCIELIIGGGG. Over 23 to 34 the chain is Periplasmic; that stretch reads RLLEPLGIFPLR. The helical transmembrane segment at 35–54 threads the bilayer; sequence YLLFVFSFILLIFNLVTFNF. Over 55-62 the chain is Cytoplasmic; it reads SITQKCVS. Residues 63 to 81 form a helical membrane-spanning segment; sequence LFIWLLLFPFYGFFVGLLA. Residues 82–94 lie on the Periplasmic side of the membrane; sequence GNKINDILFDVQP. Residues 95–112 traverse the membrane as a helical segment; sequence YLFMLSLIYLFTLRYTLK. The Cytoplasmic portion of the chain corresponds to 113-125; the sequence is VFSCEIFIKIVNA. The helical transmembrane segment at 126–146 threads the bilayer; that stretch reads FALYGSLLYISYIILLNFGLL. The Periplasmic portion of the chain corresponds to 147–167; it reads NFNLIYEHLSLTSEFFFRPDG. A helical transmembrane segment spans residues 168–187; it reads AFFSKSFYFFGVGAIISFVD. Residues 188 to 189 lie on the Cytoplasmic side of the membrane; it reads KK. A helical transmembrane segment spans residues 190–206; it reads YLKCLIIVLAILLTESR. Topologically, residues 207 to 208 are periplasmic; sequence GV. The chain crosses the membrane as a helical span at residues 209 to 226; that stretch reads LLFTTLSLLLASFKLHKL. Over 227-229 the chain is Cytoplasmic; that stretch reads YLN. The chain crosses the membrane as a helical span at residues 230 to 247; it reads TIIIILGSVLFIIMLYMV. Topologically, residues 248-300 are periplasmic; it reads GSRSEDSDSVRFNDLYFYYKNVDLATFLFGRGFGSFILDRLRIEIVPLEILQK. A helical transmembrane segment spans residues 301-318; the sequence is TGVIGVFISLVPMLLIFL. The Cytoplasmic portion of the chain corresponds to 319–329; it reads KGYFLNSTKTS. A helical transmembrane segment spans residues 330–349; it reads LMMSLILFFSITVSITNPFL. Residues 350-352 are Periplasmic-facing; sequence FTP. Residues 353–370 traverse the membrane as a helical segment; it reads MGIFIIGVVVLWVFSIEN. The Cytoplasmic portion of the chain corresponds to 371–382; sequence IQISNNLTSGAK.

Its subcellular location is the cell inner membrane. It carries out the reaction n lipid-linked O-antigen repeat units = a lipid-linked O antigen + (n-1) polyisoprenyl diphosphate.. It functions in the pathway bacterial outer membrane biogenesis; LPS O-antigen biosynthesis. Its function is as follows. Polymerase involved in the biosynthesis of the lipopolysaccharide (LPS). Catalyzes the polymerization of the O-antigen repeat units on the periplasmic face of the inner membrane, leading to the formation of the lipid-linked O-antigen molecule. This is O-antigen polymerase from Shigella flexneri.